Reading from the N-terminus, the 299-residue chain is Lathosterol oxidase (299 aa).

3 consecutive transmembrane segments (helical) span residues 32–52, 79–99, and 117–137; these read ISLL…CATL, FTVQ…LLEI, and FELV…IYWI. Residues 124 to 252 enclose the Fatty acid hydroxylase domain; sequence ISFLFFTDMF…YFTLWDRIGG (129 aa). Positions 138–143 match the Histidine box-1 motif; that stretch reads HRGLHH. The Histidine box-2 motif lies at 151–155; that stretch reads HKPHH. A helical membrane pass occupies residues 186–206; sequence IFPLHKVVYLSLYILVNIWTI. A Histidine box-3 motif is present at residues 228 to 233; it reads HHTDHH. Phosphoserine is present on Ser-253. The disordered stretch occupies residues 274–299; sequence EGKRSSHSGNGCKNEKLFNGEFTKTE. Over residues 286–299 the composition is skewed to basic and acidic residues; sequence KNEKLFNGEFTKTE.

It belongs to the sterol desaturase family. The cofactor is Fe cation.

It is found in the endoplasmic reticulum membrane. It catalyses the reaction a Delta(7)-sterol + 2 Fe(II)-[cytochrome b5] + O2 + 2 H(+) = a Delta(5),Delta(7)-sterol + 2 Fe(III)-[cytochrome b5] + 2 H2O. The catalysed reaction is lathosterol + 2 Fe(II)-[cytochrome b5] + O2 + 2 H(+) = 7-dehydrocholesterol + 2 Fe(III)-[cytochrome b5] + 2 H2O. The enzyme catalyses 5alpha-cholesta-7,24-dien-3beta-ol + 2 Fe(II)-[cytochrome b5] + O2 + 2 H(+) = 7-dehydrodesmosterol + 2 Fe(III)-[cytochrome b5] + 2 H2O. It functions in the pathway steroid biosynthesis; cholesterol biosynthesis. In terms of biological role, catalyzes the penultimate step of the biosynthesis of cholesterol, the dehydrogenation of lathosterol into 7-dehydrocholesterol (7-DHC). Cholesterol is the major sterol component in mammalian membranes and a precursor for bile acid and steroid hormone synthesis. In addition to its essential role in cholesterol biosynthesis, it also indirectly regulates ferroptosis through the production of 7-DHC. By diverting the spread of damage caused by peroxyl radicals from the phospholipid components to its sterol nucleus, 7-DHC prevents this form of cell death. This is Lathosterol oxidase from Homo sapiens (Human).